Reading from the N-terminus, the 591-residue chain is MPSSQISHQDPELGQTSSGSSSIKEKAEPQLYAGPIDPARRPDVFQEGFEDVSVTDDDNDNELLRKMGYQPVLHRSFEFFESFAASFASLDVVSGVRLTFSWGISFGGPAAYWSAMLVTGFCSIVTAACLAEICSALPAAGSIYLWAAESAGPRFGRFVSFLVAWWSTTAWTTFVASITQSTANFIFAEVSTFNNPWPTNDSDVKFRAVQWIVAEVLLVFTILLNQVPPRYYKWIFKASMLLMFIDYVMNIIWVPVATSKKPDGFRSAKWVFTETIYDQAGYIKEVDDANGNPIASLSKIVPKGWQWCLSYFATAGVIVGYDASGHIAEETKDASIKAARGIFYSTVTSFIVAFSLAILYLFCCPDLDTFTAILYNDNSPQPFVNFYSYLLGRGGHVVMNVVIILEIFLNGVVSVLACSRLVFAVSRDGVLPFSNWISQVSKTGQPKNAITVIYIVSALLLCTILPSAVAFTSLVSAAGAPSFAAYAVLAFCRLFITRDKFPKGRWSLGWLSKPCLVITLVYNLFALVVNVSPYTYPVTGPSFNYAVVIMGGVSIFAIICTIVIPKSRWVANRYRYESDSEHSASVKELKV.

Over residues 1–22 (MPSSQISHQDPELGQTSSGSSS) the composition is skewed to polar residues. Residues 1 to 42 (MPSSQISHQDPELGQTSSGSSSIKEKAEPQLYAGPIDPARRP) are disordered. A run of 5 helical transmembrane segments spans residues 98 to 118 (LTFS…AMLV), 342 to 362 (IFYS…LYLF), 397 to 417 (VVMN…SVLA), 450 to 470 (ITVI…SAVA), and 545 to 565 (YAVV…IVIP). At serine 585 the chain carries Phosphoserine.

It belongs to the amino acid-polyamine-organocation (APC) superfamily.

The protein localises to the endoplasmic reticulum membrane. The protein resides in the cell membrane. Thiamine transporter involved in the cellular uptake of thiamine. Pyrithiamine, oxythiamine, amprolium, and the thiazole part of thiamine have been shown to be also substrates of thi9. This Schizosaccharomyces pombe (strain 972 / ATCC 24843) (Fission yeast) protein is Thiamine transporter thi9 (thi9).